A 398-amino-acid chain; its full sequence is Potassium channel subfamily K member 4 (398 aa).

Topologically, residues 1–3 are cytoplasmic; it reads MRS. A helical transmembrane segment spans residues 4 to 24; the sequence is TTLLALLALVLLYLVSGALVF. At 25 to 88 the chain is on the extracellular side; sequence QALEQPHEQQ…WTNSSNHSSA (64 aa). Residues Asn81 and Asn84 are each glycosylated (N-linked (GlcNAc...) asparagine). An intramembrane region (helical) is located at residues 89–103; it reads WNLGSAFFFSGTIIT. K(+)-binding residues include Thr104, Ile105, Gly106, and Tyr107. Positions 104 to 109 are selectivity filter 1; that stretch reads TIGYGN. The stretch at 104–110 is an intramembrane region; it reads TIGYGNI. The Extracellular segment spans residues 111 to 118; the sequence is VLHTDAGR. A helical transmembrane segment spans residues 119–151; the sequence is LFCIFYALVGIPLFGMLLAGVGDRLGSSLRRGI. Residues 152–173 lie on the Cytoplasmic side of the membrane; the sequence is GHIEAIFLKWHVPPGLVRSLSA. A helical membrane pass occupies residues 174 to 195; it reads VLFLLIGCLLFVLTPTFVFSYM. Over 196 to 200 the chain is Extracellular; it reads ESWSK. An intramembrane region (helical) is located at residues 201–214; it reads LEAIYFVIVTLTTV. K(+)-binding residues include Thr213, Val214, Gly215, and Phe216. The interval 213–218 is selectivity filter 2; the sequence is TVGFGD. Residues 215–220 lie within the membrane without spanning it; sequence GFGDYV. The Extracellular segment spans residues 221-234; the sequence is PGDGTGQNSPAYQP. A helical transmembrane segment spans residues 235–261; the sequence is LVWFWILFGLAYFASVLTTIGNWLRAV. Residues 262 to 398 lie on the Cytoplasmic side of the membrane; sequence SRRTRAEMGG…GRLRDKAVPV (137 aa). Polar residues predominate over residues 282 to 292; the sequence is TVTARVTQRTG. Residues 282–398 are disordered; sequence TVTARVTQRT…GRLRDKAVPV (117 aa). Basic residues predominate over residues 370 to 389; it reads PRGRRRPNPSKKPSRPRGPG.

It belongs to the two pore domain potassium channel (TC 1.A.1.8) family. Homodimer; disulfide-linked. Forms heterodimers with other 2-pore domain K(+) channel subunits, such as KCNK2 and KCNK10. In terms of processing, N-glycosylated. In terms of tissue distribution, expressed in brain, spinal cord and eye. Not detected in heart, skeletal muscle, liver, lungs, kidney and testis.

Its subcellular location is the cell membrane. It is found in the cell projection. The protein localises to the axon. The catalysed reaction is K(+)(in) = K(+)(out). It catalyses the reaction Rb(+)(in) = Rb(+)(out). It carries out the reaction Cs(+)(in) = Cs(+)(out). Activated by arachidonic acid and other polyunsaturated fatty acids. Not affected by volatile general anesthetics such as chloroform, diethyl ether, halothane and isoflurane. Activated at intracellular and extracellular basic pHs. In terms of biological role, k(+) channel that conducts voltage-dependent outward rectifying currents upon membrane depolarization. Voltage sensing is coupled to K(+) electrochemical gradient in an 'ion flux gating' mode where outward but not inward ion flow opens the gate. Converts to voltage-independent 'leak' conductance mode upon stimulation by various stimuli including mechanical membrane stretch, basic pH, temperature and lipids. Homo- and heterodimerizes to form functional channels with distinct regulatory and gating properties. At trigeminal A-beta afferent nerves, the heterodimer of KCNK2/TREK-1 and KCNK4/TRAAK is mostly coexpressed at nodes of Ranvier where it conducts voltage-independent mechanosensitive and thermosensitive currents, allowing rapid action potential repolarization, high speed and high frequence saltatory conduction on myelinated nerves to ensure prompt sensory responses. Permeable to other monovalent cations such as Rb(+) and Cs(+). The protein is Potassium channel subfamily K member 4 of Mus musculus (Mouse).